Reading from the N-terminus, the 829-residue chain is G-type lectin S-receptor-like serine/threonine-protein kinase At1g34300 (829 aa).

The signal sequence occupies residues 1-25 (MAVKTPFLKLLPLLLLLLHFPFSFS). 2 consecutive Bulb-type lectin domains span residues 26-140 (TIPL…SSFD) and 143-260 (TDTI…PVNA). Over 26-421 (TIPLGSVIYA…KGDDNNSKVH (396 aa)) the chain is Extracellular. N-linked (GlcNAc...) asparagine glycosylation is found at asparagine 46, asparagine 98, asparagine 130, asparagine 151, asparagine 172, asparagine 178, asparagine 189, and asparagine 195. The 38-residue stretch at 264–301 (AVDQCLVYGYCGNFGICSYNDTNPICSCPSRNFDFVDV) folds into the EGF-like domain. Intrachain disulfides connect cysteine 268–cysteine 280, cysteine 274–cysteine 289, cysteine 317–cysteine 399, cysteine 350–cysteine 373, and cysteine 354–cysteine 360. Residues asparagine 283 and asparagine 320 are each glycosylated (N-linked (GlcNAc...) asparagine). Residues 317 to 399 (CSGNTTMLDL…VPSTSYVKVC (83 aa)) enclose the Apple domain. Residue asparagine 416 is glycosylated (N-linked (GlcNAc...) asparagine). Residues 422–442 (LWIVAVAVIAGLLGLVAVEIG) form a helical membrane-spanning segment. Over 443-829 (LWWCCCRKNP…RISEGSMLGS (387 aa)) the chain is Cytoplasmic. The Protein kinase domain occupies 484-759 (KSFKEKLGAG…GKVVQMLEGI (276 aa)). ATP is bound by residues 490 to 498 (LGAGGFGTV) and lysine 512. Serine 532 carries the phosphoserine modification. Positions 572–589 (DSAKFLTWEYRFNIALGT) are caM-binding. The active-site Proton acceptor is aspartate 608. Residues serine 625 and serine 799 each carry the phosphoserine modification.

The protein belongs to the protein kinase superfamily. Ser/Thr protein kinase family.

The protein resides in the cell membrane. The catalysed reaction is L-seryl-[protein] + ATP = O-phospho-L-seryl-[protein] + ADP + H(+). The enzyme catalyses L-threonyl-[protein] + ATP = O-phospho-L-threonyl-[protein] + ADP + H(+). The sequence is that of G-type lectin S-receptor-like serine/threonine-protein kinase At1g34300 from Arabidopsis thaliana (Mouse-ear cress).